A 215-amino-acid chain; its full sequence is MSKVYDWFEERLEIQAIADDITSKYVPPHVNIFYCLGGITLTCFLVQVATGFAMTFYYRPTVTEAFASVQYIMTEANFGWLIRSVHRWSASMMVLMMILHVFRVYLTGGFKKPRELTWVTGVVLGVLTASFGVTGYSLPRDQIGYWAVKIVTGVPEAIPVIGSPLVELLRGSASVGQSTLTRFYSLHTFVLPLLTAVFMLMHFLMIRKQGISGPL.

Residues 32–52 (IFYCLGGITLTCFLVQVATGF) form a helical membrane-spanning segment. Cys35 contacts heme c. Residues His86 and His100 each coordinate heme b. Helical transmembrane passes span 90 to 110 (ASMM…TGGF), 116 to 136 (LTWV…VTGY), and 186 to 206 (LHTF…FLMI). Heme b contacts are provided by His187 and His202.

Belongs to the cytochrome b family. PetB subfamily. As to quaternary structure, the 4 large subunits of the cytochrome b6-f complex are cytochrome b6, subunit IV (17 kDa polypeptide, PetD), cytochrome f and the Rieske protein, while the 4 small subunits are PetG, PetL, PetM and PetN. The complex functions as a dimer. Heme b is required as a cofactor. It depends on heme c as a cofactor.

Its subcellular location is the plastid. It localises to the chloroplast thylakoid membrane. Its function is as follows. Component of the cytochrome b6-f complex, which mediates electron transfer between photosystem II (PSII) and photosystem I (PSI), cyclic electron flow around PSI, and state transitions. The polypeptide is Cytochrome b6 (Gossypium barbadense (Sea Island cotton)).